A 626-amino-acid chain; its full sequence is MNKLFRSLAFYMLILVISVAIAVQLGGTSQQTTQLVYSDLVRYIQQGEVRSITLSGAYAEGELVSGEKFTVQLPPSSSQAPLVEMLQQHPNIKLDFRQDNTSGIWAMLLQTLVPVVLVLLAFFFIMQQTQGSGNRVMQFGKSRARLVTDDRKRVTFDDVAGIDEVKEELAEIVDFLKHPKRYLELGARIPKGVLLYGPPGTGKTLLAKAVAGEAGVPFFSISGSDFVEMFVGVGASRVRDLFEQAKKNSPCIVFIDEIDAVGRQRGAGYGGGHDEREQTLNQLLVEMDGFSANEGIIIIAATNRPDVLDPALLRPGRFDRQIVIDRPDLKGRLAIFQVHAKGKPLEPDVDLEVLAKRTPGFTGADIANLMNEAALLAARRRKKKISMQDVEDAIDRVLAGGPEKKSRVISEKEKRVTAYHEAGHAVVGHMLPHMDPLHKITIIPRGRAMGYTLFLPVEDRYNISKSEILDRMTMALGGRAAEEITFGEITSGAQDDIERTTQWARRMVTEWGMSEKLGPLTYGMKQDEVFLARDMTRLRNYSEEVAGLIDEEVRKFVHMAYQRAIDILTEHRDALEKVSEVLLEKETLEGKELQDLLEQLLPPRPKPEPLKPRMVGGGTSQVAPAF.

Topologically, residues 1 to 7 (MNKLFRS) are cytoplasmic. The chain crosses the membrane as a helical span at residues 8-28 (LAFYMLILVISVAIAVQLGGT). Topologically, residues 29-103 (SQQTTQLVYS…LDFRQDNTSG (75 aa)) are extracellular. A helical membrane pass occupies residues 104 to 124 (IWAMLLQTLVPVVLVLLAFFF). The Cytoplasmic portion of the chain corresponds to 125-626 (IMQQTQGSGN…GGTSQVAPAF (502 aa)). 197 to 204 (GPPGTGKT) is an ATP binding site. Residue H420 participates in Zn(2+) binding. Residue E421 is part of the active site. 2 residues coordinate Zn(2+): H424 and D496. The disordered stretch occupies residues 602–626 (PPRPKPEPLKPRMVGGGTSQVAPAF).

It in the central section; belongs to the AAA ATPase family. In the C-terminal section; belongs to the peptidase M41 family. In terms of assembly, homohexamer. Requires Zn(2+) as cofactor.

The protein localises to the cell membrane. Its function is as follows. Acts as a processive, ATP-dependent zinc metallopeptidase for both cytoplasmic and membrane proteins. Plays a role in the quality control of integral membrane proteins. The chain is ATP-dependent zinc metalloprotease FtsH 3 from Symbiobacterium thermophilum (strain DSM 24528 / JCM 14929 / IAM 14863 / T).